We begin with the raw amino-acid sequence, 584 residues long: ATP-dependent lipid A-core flippase 2 (584 aa).

Transmembrane regions (helical) follow at residues 32–52 (IFIA…MIYF), 68–88 (TLQL…IASF), 146–166 (SAVV…SMMV), 167–187 (YNSW…ALII), 254–274 (AISN…VLLL), and 280–300 (VLNQ…GSLL). Positions 33-315 (FIALAGLCLF…LSNINQQLQK (283 aa)) constitute an ABC transmembrane type-1 domain. The region spanning 347 to 583 (IRFNNFSFTY…AGYYQSLYQS (237 aa)) is the ABC transporter domain. 381-388 (GESGSGKS) provides a ligand contact to ATP.

Belongs to the ABC transporter superfamily. Lipid exporter (TC 3.A.1.106) family. In terms of assembly, homodimer.

Its subcellular location is the cell inner membrane. It catalyses the reaction ATP + H2O + lipid A-core oligosaccharideSide 1 = ADP + phosphate + lipid A-core oligosaccharideSide 2.. Functionally, involved in lipopolysaccharide (LPS) biosynthesis. Translocates lipid A-core from the inner to the outer leaflet of the inner membrane. Transmembrane domains (TMD) form a pore in the inner membrane and the ATP-binding domain (NBD) is responsible for energy generation. This chain is ATP-dependent lipid A-core flippase 2, found in Colwellia psychrerythraea (strain 34H / ATCC BAA-681) (Vibrio psychroerythus).